A 500-amino-acid chain; its full sequence is Glycerol kinase (500 aa).

Residue Thr16 participates in ADP binding. The ATP site is built by Thr16 and Thr17. Thr16 contributes to the sn-glycerol 3-phosphate binding site. Arg20 contributes to the ADP binding site. 4 residues coordinate sn-glycerol 3-phosphate: Arg86, Glu87, Tyr138, and Asp247. The glycerol site is built by Arg86, Glu87, Tyr138, Asp247, and Gln248. 2 residues coordinate ADP: Thr269 and Gly312. ATP contacts are provided by Thr269, Gly312, Gln316, and Gly413. Residues Gly413 and Asn417 each contribute to the ADP site.

This sequence belongs to the FGGY kinase family.

It carries out the reaction glycerol + ATP = sn-glycerol 3-phosphate + ADP + H(+). Its pathway is polyol metabolism; glycerol degradation via glycerol kinase pathway; sn-glycerol 3-phosphate from glycerol: step 1/1. Its activity is regulated as follows. Inhibited by fructose 1,6-bisphosphate (FBP). Functionally, key enzyme in the regulation of glycerol uptake and metabolism. Catalyzes the phosphorylation of glycerol to yield sn-glycerol 3-phosphate. This Rippkaea orientalis (strain PCC 8801 / RF-1) (Cyanothece sp. (strain PCC 8801)) protein is Glycerol kinase.